The sequence spans 413 residues: Scarecrow-like protein 21 (413 aa).

The 373-residue stretch at 41-413 (IVEAISRGDL…RILVSSCAWK (373 aa)) folds into the GRAS domain. The tract at residues 48–108 (GDLKLVLVAC…VARLAASGSS (61 aa)) is leucine repeat I (LRI). The tract at residues 127–192 (VYVLHEVCPY…GGAPNIRITG (66 aa)) is VHIID. The VHIID motif lies at 158–162 (IHIID). Positions 201-233 (TVKKRLEKLAKKFDVPFRFNAVSRPSCEVEVEN) are leucine repeat II (LRII). Residues 242–336 (LGVNFAYMLH…QHCMARDVVN (95 aa)) form a PFYRE region. The SAW stretch occupies residues 339 to 413 (ACEGAERIER…RILVSSCAWK (75 aa)).

Belongs to the GRAS family. Interacts with Meloidogyne incognita 16D10. As to expression, expressed in seedlings, roots, cotyledons, leaves and flowers.

The protein resides in the nucleus. Functionally, probable transcription factor involved in plant development. The chain is Scarecrow-like protein 21 (SCL21) from Arabidopsis thaliana (Mouse-ear cress).